We begin with the raw amino-acid sequence, 148 residues long: Gametocyte-specific factor 1-like (148 aa).

2 consecutive CHHC U11-48K-type zinc fingers follow at residues 6-33 (FEIC…RRKN) and 40-67 (MATC…VNRS). 8 residues coordinate Zn(2+): Cys-9, His-15, His-25, Cys-29, Cys-43, His-49, His-59, and Cys-63. Residues 67–99 (SAVEEEDTENPLKVSPPSSEQNDDTQQVSPCLP) are disordered. Residues 82 to 95 (PPSSEQNDDTQQVS) show a composition bias toward polar residues.

Belongs to the UPF0224 (FAM112) family.

In Homo sapiens (Human), this protein is Gametocyte-specific factor 1-like (GTSF1L).